We begin with the raw amino-acid sequence, 2603 residues long: Ankyrin repeat domain-containing protein 17 (2603 aa).

Met-1 is modified (N-acetylmethionine). Residues 1-32 are compositionally biased toward low complexity; the sequence is MEKATVPAAAEGEGSPPAAAAVAAPPAAAAAE. The interval 1 to 127 is disordered; that stretch reads MEKATVPAAA…DDDEEEEVSE (127 aa). Phosphoserine occurs at positions 15 and 42. A compositionally biased stretch (basic residues) spans 68–77; the sequence is PHHKAKRNRT. Residues 82–92 are compositionally biased toward low complexity; it reads SSSESSSDSDN. Over residues 93-107 the composition is skewed to gly residues; sequence SGGGGGGGGGGGGGT. A compositionally biased stretch (acidic residues) spans 112–127; that stretch reads SEEEEDDDDEEEEVSE. A Phosphoserine modification is found at Ser-152. ANK repeat units lie at residues 229–258, 262–291, 296–325, 329–358, 362–391, 396–425, 429–458, 462–491, 495–524, 529–558, 559–588, 592–621, 625–654, 659–688, and 692–721; these read SDNR…SVNE, EGES…NVED, GDIT…DVNA, TGNT…SIED, NGHT…GINT, FKES…DQEH, EMHT…QVNM, SFES…SLEE, EGYT…NINA, TQET…DIEL, GCST…NVHA, TGDT…DLEH, GGRT…NVNR, NDHT…DPTH, and DGST…NLLA. Residue Lys-314 forms a Glycyl lysine isopeptide (Lys-Gly) (interchain with G-Cter in SUMO2) linkage. The segment at 770–792 is disordered; it reads VRSKAASKQKSNSHLPANSQDVQ. Over residues 775–792 the composition is skewed to polar residues; sequence ASKQKSNSHLPANSQDVQ. Position 799 is a phosphoserine (Ser-799). ANK repeat units follow at residues 1078–1107, 1111–1140, 1145–1174, 1178–1207, 1213–1242, 1247–1276, 1280–1309, 1315–1344, 1348–1377, and 1381–1410; these read NHDT…SIEH, KGFT…DIEA, TKDT…NKEH, SDYT…EINS, LGIS…DINA, NRNT…NVEH, TGLT…DVNA, SRDT…HIDV, KGNT…DVDA, and RKIT…QFPS. Residues 1438-1522 are a coiled coil; that stretch reads VQAKDRQAAE…EKEKLKVEEE (85 aa). The residue at position 1453 (Ser-1453) is a Phosphoserine. Disordered regions lie at residues 1475–1496 and 1513–1713; these read AKRE…RKLE and EKEK…PKRE. Over residues 1477 to 1487 the composition is skewed to basic residues; it reads REKRKEKRRKK. Composition is skewed to low complexity over residues 1526 to 1546, 1598 to 1607, and 1616 to 1636; these read LTEP…TWTT, ESKSSSTSES, and SSCS…NHAS. Ser-1631 carries the phosphoserine modification. Composition is skewed to polar residues over residues 1638–1648 and 1671–1699; these read VVTTTMASKKQ and LSET…SPNG. Phosphoserine is present on residues Ser-1692, Ser-1696, and Ser-1705. The 65-residue stretch at 1721-1785 folds into the KH domain; that stretch reads RRSKKVSVPS…ESTRQATQLI (65 aa). An Asymmetric dimethylarginine modification is found at Arg-1870. 3 disordered regions span residues 1902–1991, 2007–2195, and 2269–2327; these read PRLP…PSVR, TTVT…SSSA, and VSSQ…YGSV. Composition is skewed to low complexity over residues 1946-1989 and 2007-2024; these read SNQN…SSPS and TTVT…TNAT. Ser-2038, Ser-2040, Ser-2041, Ser-2043, Ser-2055, and Ser-2063 each carry phosphoserine. 3 stretches are compositionally biased toward low complexity: residues 2068–2077, 2087–2108, and 2175–2189; these read ASASEQEASS, RPPH…QQPP, and PPSH…TPAP. A compositionally biased stretch (polar residues) spans 2269-2298; it reads VSSQSTPESMLSGKSSYLPNSDPLHQSDTS. The span at 2303-2313 shows a compositional bias: pro residues; that stretch reads FRPPLQRPAPS. Ser-2373 is modified (phosphoserine). The interval 2378 to 2447 is disordered; that stretch reads LTPCSSASNE…TGTSAPSVIG (70 aa). Positions 2379-2391 are enriched in polar residues; it reads TPCSSASNESPAQ. Residues 2392-2411 are compositionally biased toward low complexity; the sequence is SVSSGVRAPSPAPSSVPLGS. Ser-2401 bears the Phosphoserine mark. The span at 2435–2447 shows a compositional bias: polar residues; that stretch reads IRQTGTSAPSVIG.

In terms of assembly, interacts (via N-terminus) with NOD2. Interacts with CDK2, MCM3, MCM5, MCM7, CDC6 and PCNA. Interacts with MAVS and IFIH1. Interacts (via the second ankyrin repeat cluster) with RIGI. Post-translationally, phosphorylated by CDK2. Highly expressed in fetal liver. Detected in adult liver cells, ovarian oocytes, seminiferous tubules of the testes and pelvic region of the kidney. It was not detected in heart, gut, lung, spleen and skeletal muscle. Earliest specific in situ marker of hepatic differentiation during embryogenesis, useful for characterization of inductive events involved in hepatic specification.

It is found in the cytoplasm. The protein resides in the nucleus. Functionally, could play pivotal roles in cell cycle and DNA regulation. Involved in innate immune defense against viruse by positively regulating the viral dsRNA receptors RIGI and IFIH1 signaling pathways. Involves in NOD2- and NOD1-mediated responses to bacteria suggesting a role in innate antibacterial immune pathways too. Could play a central role for the formation and/or maintenance of the blood vessels of the circulation system. The chain is Ankyrin repeat domain-containing protein 17 (Ankrd17) from Mus musculus (Mouse).